We begin with the raw amino-acid sequence, 132 residues long: MSMTDNVADMLTRIRNAYKSKLISVSFPSSKIKTSILDVLQKEGYIKDYITTQKNNISYTEVALKYSVNGDASICEIHRVSKPGKRVYSAIKDLKGYYNNMGIYILSTPYGVMSDREAHIKNVGGEVICKVF.

Belongs to the universal ribosomal protein uS8 family. As to quaternary structure, part of the 30S ribosomal subunit. Contacts proteins S5 and S12.

Its function is as follows. One of the primary rRNA binding proteins, it binds directly to 16S rRNA central domain where it helps coordinate assembly of the platform of the 30S subunit. This Rickettsia rickettsii (strain Sheila Smith) protein is Small ribosomal subunit protein uS8.